The chain runs to 362 residues: Carbamoyl phosphate synthase small chain (362 aa).

Residues 1-169 (MGKRLLILED…TKTAYPAPGV (169 aa)) are CPSase. Residues serine 46, glycine 220, and glycine 222 each coordinate L-glutamine. The 187-residue stretch at 172 to 358 (NIVLVDFGLK…LELIDAFQLE (187 aa)) folds into the Glutamine amidotransferase type-1 domain. The active-site Nucleophile is cysteine 247. The L-glutamine site is built by methionine 248, glutamine 251, asparagine 289, glycine 291, and tyrosine 292. Active-site residues include histidine 331 and aspartate 333.

This sequence belongs to the CarA family. Composed of two chains; the small (or glutamine) chain promotes the hydrolysis of glutamine to ammonia, which is used by the large (or ammonia) chain to synthesize carbamoyl phosphate. Tetramer of heterodimers (alpha,beta)4.

It catalyses the reaction hydrogencarbonate + L-glutamine + 2 ATP + H2O = carbamoyl phosphate + L-glutamate + 2 ADP + phosphate + 2 H(+). It carries out the reaction L-glutamine + H2O = L-glutamate + NH4(+). It functions in the pathway amino-acid biosynthesis; L-arginine biosynthesis; carbamoyl phosphate from bicarbonate: step 1/1. It participates in pyrimidine metabolism; UMP biosynthesis via de novo pathway; (S)-dihydroorotate from bicarbonate: step 1/3. In terms of biological role, small subunit of the glutamine-dependent carbamoyl phosphate synthetase (CPSase). CPSase catalyzes the formation of carbamoyl phosphate from the ammonia moiety of glutamine, carbonate, and phosphate donated by ATP, constituting the first step of 2 biosynthetic pathways, one leading to arginine and/or urea and the other to pyrimidine nucleotides. The small subunit (glutamine amidotransferase) binds and cleaves glutamine to supply the large subunit with the substrate ammonia. The chain is Carbamoyl phosphate synthase small chain from Streptococcus mutans serotype c (strain ATCC 700610 / UA159).